The chain runs to 348 residues: Succinoglycan biosynthesis protein ExoO (348 aa).

Residues 322–348 (HSAPRAAPVTAAAERSPLGNDPRISKG) form a disordered region. Low complexity predominate over residues 324–334 (APRAAPVTAAA).

This sequence belongs to the glycosyltransferase 2 family.

It is found in the cytoplasm. The protein operates within glycan metabolism; exopolysaccharide biosynthesis. Glycosyltransferase required for the synthesis of succinoglycan (EPS I). Needed for the addition of the fifth sugar (glucose), catalyzes the formation of a beta-1,6 linkage between the fourth and fifth sugar. The protein is Succinoglycan biosynthesis protein ExoO (exoO) of Rhizobium meliloti (strain 1021) (Ensifer meliloti).